The following is a 231-amino-acid chain: Ion-translocating oxidoreductase complex subunit E (231 aa).

The next 7 helical transmembrane spans lie at 18 to 38, 39 to 59, 69 to 89, 93 to 113, 127 to 147, 157 to 177, and 182 to 202; these read GLVQLLGLCPLLAVTATITNA, LGLGVATLLVLIGSNVLVSLV, IPVFVMIIAALVTCVQLLINA, NLYLSLGIFLPLIVTNCVIIG, SAFDGLMMGLGFTAVLVVLGA, LFGGADLLLGDWASVLTIHVW, and PFLLAMLPPGAFIGMGLLIAL.

It belongs to the NqrDE/RnfAE family. In terms of assembly, the complex is composed of six subunits: RnfA, RnfB, RnfC, RnfD, RnfE and RnfG.

It localises to the cell inner membrane. Its function is as follows. Part of a membrane-bound complex that couples electron transfer with translocation of ions across the membrane. The protein is Ion-translocating oxidoreductase complex subunit E of Shewanella frigidimarina (strain NCIMB 400).